Reading from the N-terminus, the 538-residue chain is Putative cysteine ligase BshC (538 aa).

The stretch at 460-484 (KINEQIELLERMLKRNVEKKHEVEL) forms a coiled coil.

This sequence belongs to the BshC family.

Its function is as follows. Involved in bacillithiol (BSH) biosynthesis. May catalyze the last step of the pathway, the addition of cysteine to glucosamine malate (GlcN-Mal) to generate BSH. The protein is Putative cysteine ligase BshC of Bacillus cereus (strain ZK / E33L).